Reading from the N-terminus, the 623-residue chain is MIVVTSFVRNSAVAAVASTPWNVRLRELAYQSLFSESISLYRSMLRSGSSPDAFSFPFILKSCASLSLPVSGQQLHCHVTKGGCETEPFVLTALISMYCKCGLVADARKVFEENPQSSQLSVCYNALISGYTANSKVTDAAYMFRRMKETGVSVDSVTMLGLVPLCTVPEYLWLGRSLHGQCVKGGLDSEVAVLNSFITMYMKCGSVEAGRRLFDEMPVKGLITWNAVISGYSQNGLAYDVLELYEQMKSSGVCPDPFTLVSVLSSCAHLGAKKIGHEVGKLVESNGFVPNVFVSNASISMYARCGNLAKARAVFDIMPVKSLVSWTAMIGCYGMHGMGEIGLMLFDDMIKRGIRPDGAVFVMVLSACSHSGLTDKGLELFRAMKREYKLEPGPEHYSCLVDLLGRAGRLDEAMEFIESMPVEPDGAVWGALLGACKIHKNVDMAELAFAKVIEFEPNNIGYYVLMSNIYSDSKNQEGIWRIRVMMRERAFRKKPGYSYVEHKGRVHLFLAGDRSHEQTEEVHRMLDELETSVMELAGNMDCDRGEEVSSTTREHSERLAIAFGILNSIPGTEILVIKNLRVCEDCHVFLKQVSKIVDRQFVVRDASRFHYFKDGVCSCKDYW.

The N-terminal 35 residues, 1 to 35 (MIVVTSFVRNSAVAAVASTPWNVRLRELAYQSLFS), are a transit peptide targeting the mitochondrion. PPR repeat units lie at residues 17–51 (ASTP…GSSP), 52–86 (DAFS…GCET), 87–117 (EPFV…NPQS), 120–154 (LSVC…GVSV), 155–189 (DSVT…GLDS), 190–220 (EVAV…MPVK), 221–255 (GLIT…GVCP), 256–290 (DPFT…GFVP), 291–321 (NVFV…MPVK), 322–356 (SLVS…GIRP), 357–387 (DGAV…MKRE), and 393–423 (GPEH…MPVE). The interval 428–503 (VWGALLGACK…KPGYSYVEHK (76 aa)) is type E motif. The tract at residues 504–535 (GRVHLFLAGDRSHEQTEEVHRMLDELETSVME) is type E(+) motif. Residues 536-623 (LAGNMDCDRG…DGVCSCKDYW (88 aa)) are type DYW motif.

This sequence belongs to the PPR family. PCMP-H subfamily. In terms of assembly, interacts with MORF8/RIP1.

The protein localises to the mitochondrion. Its function is as follows. Involved in C-to-U editing of mitochondrial RNA. Required specifically for editing the mitochondrial NAD2 transcript. The chain is Putative pentatricopeptide repeat-containing protein At3g11460, mitochondrial (PCMP-H52) from Arabidopsis thaliana (Mouse-ear cress).